The following is a 198-amino-acid chain: Sensory transduction protein RegX3 (198 aa).

The region spanning 1–87 (MVTDGPAALA…ELIARIRAVL (87 aa)) is the Response regulatory domain. D23 carries the 4-aspartylphosphate modification. The segment at residues 99–198 (DGVLESGPLR…VRGLGYKLES (100 aa)) is a DNA-binding region (ompR/PhoB-type).

In terms of processing, phosphorylated by SenX3.

Member of the two-component regulatory system SenX3/RegX3. The polypeptide is Sensory transduction protein RegX3 (rgx3) (Mycobacterium leprae (strain TN)).